The primary structure comprises 518 residues: Glutamate--cysteine ligase (518 aa).

The protein belongs to the glutamate--cysteine ligase type 1 family. Type 1 subfamily.

The catalysed reaction is L-cysteine + L-glutamate + ATP = gamma-L-glutamyl-L-cysteine + ADP + phosphate + H(+). The protein operates within sulfur metabolism; glutathione biosynthesis; glutathione from L-cysteine and L-glutamate: step 1/2. This chain is Glutamate--cysteine ligase, found in Buchnera aphidicola subsp. Acyrthosiphon pisum (strain 5A).